Consider the following 230-residue polypeptide: RNA-binding riboflavin kinase RibR (230 aa).

Belongs to the RibR family.

The catalysed reaction is riboflavin + ATP = FMN + ADP + H(+). Functionally, may be directly involved in the regulation of the rib genes. C-terminal part of RibR specifically binds to RFN of the rib leader of the riboflavin biosynthetic operon. The RFN element is a sequence within the rib-leader mRNA reported to serve as a receptor for an FMN-dependent riboswitch. Possibly, RibR produces the comodulator FMN through its own N-terminal flavokinase activity. FMN-activated RibR may stabilize the anti-anti terminator structure of RFN mRNA, causing transcription termination of the rib genes in trans. This Bacillus subtilis (strain 168) protein is RNA-binding riboflavin kinase RibR (ribR).